Consider the following 1354-residue polypeptide: RNA-directed RNA polymerase VP1 (1354 aa).

It catalyses the reaction RNA(n) + a ribonucleoside 5'-triphosphate = RNA(n+1) + diphosphate. In terms of biological role, RNA-directed RNA polymerase that is involved in transcription and genome replication. Following infection, it catalyzes the synthesis of fully conservative plus strands. After core assembly, which consists in recruitment of one capped plus-strand for each genomic segments and polymerase complexes, the polymerase switches mode and catalyzes the synthesis of complementary minus-strands. The polypeptide is RNA-directed RNA polymerase VP1 (Cryphonectria parasitica mycoreovirus 1 (strain 9B21) (CpMYRV-1)).